We begin with the raw amino-acid sequence, 348 residues long: MGSESESVCVTGASGFIGSWLVMRLLEHGYTVRATVRDPTNQKKVKHLLDLPKAETHLTLWKADLADEGSFDEAIQGCSGVFHVATPMDFESKDPENEVIKPTINGLLDILKACQKAKTVRKLVFTSSAGTVNVEEHQKPVYDESNWSDVEFCRSVKMTGWMYFVSKTLAEQAAWKYAKENNIDFITIIPTLVIGPFLMPSMPPSLITGLSPILRNESHYGIIKQGQYVHLDDLCLSHIYLYEHPKAEGRYICSSHDATIHELVKMLREKYPEYNIPTKFKGIDDNLEPVHFSSKKLREIGFEFKYSLEDMFVGAVDACRAKGLIPIPIPAEKTEAAEESNLVDVKVG.

2 residues coordinate NADP(+): Lys-44 and Tyr-163.

This sequence belongs to the NAD(P)-dependent epimerase/dehydratase family. Dihydroflavonol-4-reductase subfamily.

The catalysed reaction is a (2R,3S,4S)-leucoanthocyanidin + NADP(+) = a (2R,3R)-dihydroflavonol + NADPH + H(+). It catalyses the reaction (2S)-flavan-4-ol + NADP(+) = (2S)-flavanone + NADPH + H(+). Functionally, bifunctional enzyme involved in flavonoid metabolism. May use dihydroquercetin, dihydrokaempferol, eriodictyol, garbanzol (5-deoxydihydrokaempferol), dihydrofisetin (5-deoxydihydroquercetin), naringenin to a low extent (10%), but not 5-deoxynaringenin or butin (5-deoxyeriodictyol) as substrate. This is Bifunctional dihydroflavonol 4-reductase/flavanone 4-reductase (DFR) from Malus domestica (Apple).